The primary structure comprises 640 residues: F-box only protein 43 (640 aa).

Thr176 is subject to Phosphothreonine. At Ser275 the chain carries Phosphoserine. A disordered region spans residues Leu328 to Gln354. The 58-residue stretch at Met423 to Lys480 folds into the F-box domain. The ZBR-type zinc finger occupies Ala568 to Gly616. Zn(2+) is bound by residues Cys572, Cys575, Cys590, Cys595, Cys600, Cys603, His608, and Cys613. Positions Arg615–Leu640 are disordered.

Part of a SCF (SKP1-cullin-F-box) protein ligase complex. Interaction with SKP1 does not occur. Interacts with ANAPC2; the interaction is direct, ANAPC4, CDC16, CDC23; the interaction is direct, ANAPC10; the interaction is direct and CDC26, during spermatogenesis. Interacts with CDC20. In terms of processing, phosphorylated on Thr-176 and Ser-275 in response to calcium, which is a prerequisite for ubiquitination and proteasomal degradation. Ubiquitinated in response to calcium, which promotes proteasomal degradation. In terms of tissue distribution, present in testis and ovary (at protein level). Expression is high in immature oocytes, and diminishes after oocyte activation. Expressed post-meiotically in spermatids and sperm.

It participates in protein modification; protein ubiquitination. Required to establish and maintain the arrest of oocytes at the second meiotic metaphase until fertilization. Acts by inhibiting the anaphase-promoting complex/cyclosome (APC/C) ubiquitin ligase. Probably recognizes and binds to some phosphorylated proteins and promotes their ubiquitination and degradation. Plays a vital role in modulating the ubiquitilation of CCNB1 and CDK1 during gametogenesis. This is F-box only protein 43 (Fbxo43) from Mus musculus (Mouse).